Here is a 497-residue protein sequence, read N- to C-terminus: Serine hydroxymethyltransferase (497 aa).

(6S)-5,6,7,8-tetrahydrofolate contacts are provided by residues L176 and 180–182; that span reads GHL. At K289 the chain carries N6-(pyridoxal phosphate)lysine.

It belongs to the SHMT family. As to quaternary structure, homodimer. Requires pyridoxal 5'-phosphate as cofactor.

The protein localises to the cytoplasm. It catalyses the reaction (6R)-5,10-methylene-5,6,7,8-tetrahydrofolate + glycine + H2O = (6S)-5,6,7,8-tetrahydrofolate + L-serine. It participates in one-carbon metabolism; tetrahydrofolate interconversion. The protein operates within amino-acid biosynthesis; glycine biosynthesis; glycine from L-serine: step 1/1. In terms of biological role, catalyzes the reversible interconversion of serine and glycine with tetrahydrofolate (THF) serving as the one-carbon carrier. This reaction serves as the major source of one-carbon groups required for the biosynthesis of purines, thymidylate, methionine, and other important biomolecules. Also exhibits THF-independent aldolase activity toward beta-hydroxyamino acids, producing glycine and aldehydes, via a retro-aldol mechanism. This Chlamydia trachomatis serovar A (strain ATCC VR-571B / DSM 19440 / HAR-13) protein is Serine hydroxymethyltransferase.